The chain runs to 49 residues: Large ribosomal subunit protein uL16 (49 aa).

Belongs to the universal ribosomal protein uL16 family. Part of the 50S ribosomal subunit.

Its function is as follows. Binds 23S rRNA and is also seen to make contacts with the A and possibly P site tRNAs. The chain is Large ribosomal subunit protein uL16 (rplP) from Aquifex pyrophilus.